Reading from the N-terminus, the 737-residue chain is Aryl hydrocarbon receptor nuclear translocator 2 (737 aa).

Residues 1–73 (MATPAAVNPS…SRYDDDQIPG (73 aa)) are disordered. Residues 64-73 (SRYDDDQIPG) show a composition bias toward basic and acidic residues. Positions 78 to 131 (YARENHSEIERRRRNKMTQYITELSDMVPTCSALARKPDKLTILRMAVSHMKSM) constitute a bHLH domain. 2 consecutive PAS domains span residues 149–221 (TEQE…ENSM) and 340–406 (SMDM…QVVK). The 44-residue stretch at 413-456 (SVMYRFRMKNREWMLIRTSSFTFQNPYSDEIEYIICTNTNVKQL) folds into the PAC domain. 2 disordered regions span residues 525-556 (MMVP…FSSS) and 588-721 (QVSW…TTNY). 2 stretches are compositionally biased toward polar residues: residues 528–543 (PSST…QGSP) and 588–626 (QVSW…YQAD). A compositionally biased stretch (low complexity) spans 627–642 (PSSYSPLSSPATSSPS). Residues 643–656 (GNAYSNLANRNTAF) are compositionally biased toward polar residues. A compositionally biased stretch (low complexity) spans 659–688 (SGESSQSGGQFQGRPSEVWSQWQSQHHSQQ).

Efficient DNA binding requires dimerization with another bHLH protein. Heterodimer with the aryl hydrocarbon receptor (AHR), SIM1 or HIF2A/EPAS-1. As to expression, isoform 1 and isoform 2 are most highly expressed in the brain, eye and skeletal muscle and to a lower degree in liver, heart, kidney and swim bladder. Isoform 3 is most highly expressed in the eye, forebrain, midbrain, hindbrain, skeletal muscle, gills and brain but is barely detectable in liver, heart, kidney and swim bladder. Before the pharyngula period isoform 3 is expressed throughout the entire embryo and during this period extensively in the brain and eye.

Its subcellular location is the nucleus. Its function is as follows. Transcription factor that plays a role in the development of the hypothalamo-pituitary axis. Specifically recognizes the xenobiotic response element (XRE). Isoform 1 acts as a transcriptional activator. Isoform 3 acts as a transcriptional repressor. In Danio rerio (Zebrafish), this protein is Aryl hydrocarbon receptor nuclear translocator 2.